We begin with the raw amino-acid sequence, 346 residues long: Putative alpha/beta hydrolase R526 (346 aa).

This sequence belongs to the AB hydrolase 3 family.

It localises to the virion. This chain is Putative alpha/beta hydrolase R526, found in Acanthamoeba polyphaga mimivirus (APMV).